The chain runs to 321 residues: Lipoyl synthase (321 aa).

Positions 68, 73, 79, 94, 98, 101, and 308 each coordinate [4Fe-4S] cluster. A Radical SAM core domain is found at 80-297 (FNHGTATFMI…KELAESIGFT (218 aa)).

The protein belongs to the radical SAM superfamily. Lipoyl synthase family. [4Fe-4S] cluster serves as cofactor.

The protein resides in the cytoplasm. The enzyme catalyses [[Fe-S] cluster scaffold protein carrying a second [4Fe-4S](2+) cluster] + N(6)-octanoyl-L-lysyl-[protein] + 2 oxidized [2Fe-2S]-[ferredoxin] + 2 S-adenosyl-L-methionine + 4 H(+) = [[Fe-S] cluster scaffold protein] + N(6)-[(R)-dihydrolipoyl]-L-lysyl-[protein] + 4 Fe(3+) + 2 hydrogen sulfide + 2 5'-deoxyadenosine + 2 L-methionine + 2 reduced [2Fe-2S]-[ferredoxin]. It functions in the pathway protein modification; protein lipoylation via endogenous pathway; protein N(6)-(lipoyl)lysine from octanoyl-[acyl-carrier-protein]: step 2/2. Catalyzes the radical-mediated insertion of two sulfur atoms into the C-6 and C-8 positions of the octanoyl moiety bound to the lipoyl domains of lipoate-dependent enzymes, thereby converting the octanoylated domains into lipoylated derivatives. The polypeptide is Lipoyl synthase (Shewanella halifaxensis (strain HAW-EB4)).